The primary structure comprises 662 residues: MESMYSREQYLSLCKELEKDDYCYYVLHNAVISDYDYDMKMQKLLAIEAQHPEWKVLWSPSMRLGDRVSGNFPVVAHSHPMLSIANAYTLEELNDFFSRVEKTLGYAPIYTLELKIDGIAVAIRYEQGILVQALSRGNGQKGEDITANIRTIRSLPLRLPKDAPEFLEVRGEVFFKRETFEQINAAQRQAEKPEFANPRNAAGGTLKLLSAKEAAQRNLELSVYGSLSDENTESHYDNLMLCKRWGFPIFGQPRQCQTIAEVVKSLDEIEGLRDQLPMEIDGVVIKVDDVEAQKALGMTAKHYRWALAYKYAPERAETILENILIQVGRTGVLTPVAKLSPVFLSGSRVSRASLYNEEEIERKDIRIGDTVYVEKGGEIIPKVVGVCLEKRPEGTQPWVMPEFCPVCHGKVTRESDKVSVRCTNPLCSAGAIEKIRFFVGRGALDIDHLGEKVITKLFDLGVIHRCCDIFKITEEDLLQVPGFKDKSVKNVLKSIEKAKQAPLDRFIAALGIPYVGVRVASALAQHFLNLEAVMGASLEELKSIEGIGDKVAESIEAYFNQQDTIEEIQKMLSLGVNVLPYHRESSSCLGKTFVITGTLKKMTRSEAEASIRNCGGKVGSSVSKSTDYLVVGEDPGSKFKKAQELEIPILNENDLLKILYPN.

Residues 34–38, 83–84, and Glu113 contribute to the NAD(+) site; these read DYDYD and SI. The N6-AMP-lysine intermediate role is filled by Lys115. NAD(+)-binding residues include Arg136, Glu172, Lys286, and Lys310. Residues Cys404, Cys407, Cys422, and Cys427 each coordinate Zn(2+). The BRCT domain maps to 583-662; sequence RESSSCLGKT…NDLLKILYPN (80 aa).

It belongs to the NAD-dependent DNA ligase family. LigA subfamily. The cofactor is Mg(2+). Requires Mn(2+) as cofactor.

The catalysed reaction is NAD(+) + (deoxyribonucleotide)n-3'-hydroxyl + 5'-phospho-(deoxyribonucleotide)m = (deoxyribonucleotide)n+m + AMP + beta-nicotinamide D-nucleotide.. Its function is as follows. DNA ligase that catalyzes the formation of phosphodiester linkages between 5'-phosphoryl and 3'-hydroxyl groups in double-stranded DNA using NAD as a coenzyme and as the energy source for the reaction. It is essential for DNA replication and repair of damaged DNA. The chain is DNA ligase from Chlamydia caviae (strain ATCC VR-813 / DSM 19441 / 03DC25 / GPIC) (Chlamydophila caviae).